The following is a 530-amino-acid chain: Histone-arginine methyltransferase CARMER (530 aa).

The 310-residue stretch at 141–450 (ASQYFQFYGY…QSYDVTIDLH (310 aa)) folds into the SAM-dependent MTase PRMT-type domain. Positions 154, 163, 187, 209, 238, and 266 each coordinate S-adenosyl-L-methionine. Arg-501 carries the asymmetric dimethylarginine; by autocatalysis modification.

The protein belongs to the class I-like SAM-binding methyltransferase superfamily. Protein arginine N-methyltransferase family. As to quaternary structure, homodimer. Post-translationally, the dimethylated protein is the major form.

It is found in the cytoplasm. Its subcellular location is the nucleus. It catalyses the reaction L-arginyl-[protein] + 2 S-adenosyl-L-methionine = N(omega),N(omega)-dimethyl-L-arginyl-[protein] + 2 S-adenosyl-L-homocysteine + 2 H(+). In terms of biological role, methylates (mono- and asymmetric dimethylation) the guanidino nitrogens of arginyl residues in proteins. May methylate histone H3 at 'Arg-17' and activate transcription via chromatin remodeling. The chain is Histone-arginine methyltransferase CARMER (Art4) from Drosophila yakuba (Fruit fly).